The sequence spans 588 residues: Adenine deaminase (588 aa).

It belongs to the metallo-dependent hydrolases superfamily. Adenine deaminase family. In terms of assembly, homodimer. Requires Mn(2+) as cofactor.

It catalyses the reaction adenine + H2O + H(+) = hypoxanthine + NH4(+). The protein is Adenine deaminase of Shigella flexneri serotype 5b (strain 8401).